The following is a 313-amino-acid chain: PGR5-like protein 1B, chloroplastic (313 aa).

The transit peptide at 1-49 (MAFTLTIPRFSAISRKPITCSSSRTQCPAPFTHGRSISLRRRLTLLPLK) directs the protein to the chloroplast. Alanine 50 is subject to N-acetylalanine. The Stromal segment spans residues 50-187 (ASTDQSGQVG…KVYSDLAIDY (138 aa)). The cysteines at positions 71 and 172 are disulfide-linked. The chain crosses the membrane as a helical span at residues 188-208 (FKMFLLNVPATVVALGLFFFL). The Lumenal, thylakoid portion of the chain corresponds to 209–225 (DDITGFEITYLLELPEP). Residues 226–246 (FSFIFTWFAAVPAIVYLALSL) form a helical membrane-spanning segment. The Stromal segment spans residues 247–313 (TKLILKDFLI…LITLPEGGKA (67 aa)).

This sequence belongs to the PGR5 family. As to quaternary structure, homodimer and heterodimer with PGR5. Interacts with PGR5, FD2, psaD1, LFNR1 and LFNR2. Also interacts with petC and a Fe-containing cofactor (FCC). Post-translationally, disulfide bonds; Cys-289 and Cys-292 are probably involved in the formation of disulfide bridges with 'Cys-11' and 'Cys-105' of PGR5 while Cys-261 and Cys-264 are probably involved in the binding of a Fe-containing cofactor (FCC).

Its subcellular location is the plastid. The protein resides in the chloroplast thylakoid membrane. With respect to regulation, inhibited by antimycin A. In terms of biological role, ferredoxin-plastoquinone reductase involved in cyclic electron flow (CEF) around photosystem I. The homodimer is probably not involved in CEF. The protein is PGR5-like protein 1B, chloroplastic (PGRL1B) of Arabidopsis thaliana (Mouse-ear cress).